The sequence spans 375 residues: DNA replication and repair protein RecF (375 aa).

Gly34 to Thr41 lines the ATP pocket.

It belongs to the RecF family.

It is found in the cytoplasm. Functionally, the RecF protein is involved in DNA metabolism; it is required for DNA replication and normal SOS inducibility. RecF binds preferentially to single-stranded, linear DNA. It also seems to bind ATP. The chain is DNA replication and repair protein RecF from Rhizobium rhizogenes (strain K84 / ATCC BAA-868) (Agrobacterium radiobacter).